The chain runs to 312 residues: Beta-ketoacyl-[acyl-carrier-protein] synthase III (312 aa).

Catalysis depends on residues C112 and H237. The ACP-binding stretch occupies residues 238–242 (QANIR). N267 is an active-site residue.

The protein belongs to the thiolase-like superfamily. FabH family. In terms of assembly, homodimer.

The protein resides in the cytoplasm. It catalyses the reaction malonyl-[ACP] + acetyl-CoA + H(+) = 3-oxobutanoyl-[ACP] + CO2 + CoA. The protein operates within lipid metabolism; fatty acid biosynthesis. Functionally, catalyzes the condensation reaction of fatty acid synthesis by the addition to an acyl acceptor of two carbons from malonyl-ACP. Catalyzes the first condensation reaction which initiates fatty acid synthesis and may therefore play a role in governing the total rate of fatty acid production. Possesses both acetoacetyl-ACP synthase and acetyl transacylase activities. Its substrate specificity determines the biosynthesis of branched-chain and/or straight-chain of fatty acids. In Listeria welshimeri serovar 6b (strain ATCC 35897 / DSM 20650 / CCUG 15529 / CIP 8149 / NCTC 11857 / SLCC 5334 / V8), this protein is Beta-ketoacyl-[acyl-carrier-protein] synthase III.